The following is a 383-amino-acid chain: S-adenosylmethionine synthase (383 aa).

ATP is bound at residue His-15. Position 17 (Asp-17) interacts with Mg(2+). Glu-43 contributes to the K(+) binding site. The L-methionine site is built by Glu-56 and Gln-99. A flexible loop region spans residues 99–109; it reads QSPDINQGVDR. Residues 164 to 166, 230 to 231, Asp-239, 245 to 246, Ala-262, and Lys-266 contribute to the ATP site; these read DAK, RF, and RK. Position 239 (Asp-239) interacts with L-methionine. Residue Lys-270 participates in L-methionine binding.

Belongs to the AdoMet synthase family. As to quaternary structure, homotetramer; dimer of dimers. Mg(2+) is required as a cofactor. It depends on K(+) as a cofactor.

The protein resides in the cytoplasm. It carries out the reaction L-methionine + ATP + H2O = S-adenosyl-L-methionine + phosphate + diphosphate. It participates in amino-acid biosynthesis; S-adenosyl-L-methionine biosynthesis; S-adenosyl-L-methionine from L-methionine: step 1/1. In terms of biological role, catalyzes the formation of S-adenosylmethionine (AdoMet) from methionine and ATP. The overall synthetic reaction is composed of two sequential steps, AdoMet formation and the subsequent tripolyphosphate hydrolysis which occurs prior to release of AdoMet from the enzyme. This chain is S-adenosylmethionine synthase, found in Shewanella amazonensis (strain ATCC BAA-1098 / SB2B).